The following is a 45-amino-acid chain: MTSGNNINQPVTYPIFTVRWLAVHTLAVPTVFFLGAIASMQFIQR.

The helical transmembrane segment at 20-36 threads the bilayer; the sequence is WLAVHTLAVPTVFFLGA. His-24 contacts heme.

This sequence belongs to the PsbE/PsbF family. As to quaternary structure, heterodimer of an alpha subunit and a beta subunit. PSII is composed of 1 copy each of membrane proteins PsbA, PsbB, PsbC, PsbD, PsbE, PsbF, PsbH, PsbI, PsbJ, PsbK, PsbL, PsbM, PsbT, PsbX, PsbY, PsbZ, Psb30/Ycf12, peripheral proteins PsbO, CyanoQ (PsbQ), PsbU, PsbV and a large number of cofactors. It forms dimeric complexes. It depends on heme b as a cofactor.

It localises to the cellular thylakoid membrane. Its function is as follows. This b-type cytochrome is tightly associated with the reaction center of photosystem II (PSII). PSII is a light-driven water:plastoquinone oxidoreductase that uses light energy to abstract electrons from H(2)O, generating O(2) and a proton gradient subsequently used for ATP formation. It consists of a core antenna complex that captures photons, and an electron transfer chain that converts photonic excitation into a charge separation. The chain is Cytochrome b559 subunit beta from Trichormus variabilis (strain ATCC 29413 / PCC 7937) (Anabaena variabilis).